The sequence spans 480 residues: Acetylxylan esterase (480 aa).

Residues 1 to 19 form the signal peptide; sequence MNRKLFMTGLLMLAMTMQA.

The protein belongs to the AB hydrolase superfamily.

The catalysed reaction is Deacetylation of xylans and xylo-oligosaccharides.. It participates in glycan degradation; xylan degradation. Its function is as follows. Involved in degradation of plant cell wall polysaccharides. Is an acetyl esterase with broad substrate specificity, releasing acetic acid from acetylated xylo-oligosaccharides and acetylated xylan as well as xylose-tetraacetate, 4-O-methylumbelliferyl acetate, glucose-pentaacetate, and cephalosporin C. Appears to have greater activity on oligosaccharides than on polymeric substrates. Is also able to release acetic acid from xylo-oligosaccharides with 4-O-methylglucuronic acid side groups proximally located to O-acetyl esters. Preferentially targets xylo-oligosaccharides possessing three or more O-acetyl groups, but following their depletion it is active on the less acetylated portion of the substrate. This chain is Acetylxylan esterase, found in Xylanibacter ruminicola (strain ATCC 19189 / DSM 19721 / CIP 105475 / JCM 8958 / 23) (Prevotella ruminicola).